The primary structure comprises 676 residues: RNA helicase NPH-II (676 aa).

Positions 172 to 347 (FSAWISHRPV…VFLPNPAFIH (176 aa)) constitute a Helicase ATP-binding domain. ATP is bound at residue 185–192 (GGTGVGKT). The DEXH box motif lies at 296-299 (DEVH). One can recognise a Helicase C-terminal domain in the interval 366–535 (NPSSRMAYIE…NYILYANKFN (170 aa)).

Belongs to the DEAD box helicase family. DEAH subfamily. In terms of assembly, monomer.

The protein resides in the virion. The catalysed reaction is ATP + H2O = ADP + phosphate + H(+). Functionally, NTP-dependent helicase that catalyzes unidirectional unwinding of 3'tailed duplex RNAs and plays an important role during transcription of early mRNAs, presumably by preventing R-loop formation behind the elongating RNA polymerase. Might also play a role in the export of newly synthesized mRNA chains out of the core into the cytoplasm. Required for replication and propagation of viral particles. The protein is RNA helicase NPH-II (OPG084) of Vaccinia virus (strain Ankara) (VACV).